Reading from the N-terminus, the 312-residue chain is Very-long-chain 3-oxoacyl-CoA reductase (312 aa).

The next 3 helical transmembrane spans lie at 33 to 53 (VWGI…WAVV), 181 to 201 (GVIL…LTLY), and 274 to 294 (HAFM…NLLM). Residue 48–77 (GAWAVVTGATDGIGKAYAKELAKRGMKVAL) participates in NADP(+) binding. Position 188 (Ser188) interacts with substrate. Tyr201 serves as the catalytic Proton acceptor.

This sequence belongs to the short-chain dehydrogenases/reductases (SDR) family. 17-beta-HSD 3 subfamily. Brain.

Its subcellular location is the endoplasmic reticulum membrane. The enzyme catalyses a very-long-chain (3R)-3-hydroxyacyl-CoA + NADP(+) = a very-long-chain 3-oxoacyl-CoA + NADPH + H(+). It carries out the reaction 17beta-estradiol + NAD(+) = estrone + NADH + H(+). It catalyses the reaction 17beta-estradiol + NADP(+) = estrone + NADPH + H(+). The catalysed reaction is 3-oxooctadecanoyl-CoA + NADPH + H(+) = (3R)-hydroxyoctadecanoyl-CoA + NADP(+). The enzyme catalyses (7Z,10Z,13Z,16Z)-3-oxodocosatetraenoyl-CoA + NADPH + H(+) = (3R)-hydroxy-(7Z,10Z,13Z,16Z)-docosatetraenoyl-CoA + NADP(+). It carries out the reaction 3-oxo-(7Z,10Z,13Z,16Z,19Z)-docosapentaenoyl-CoA + NADPH + H(+) = (3R)-hydroxy-(7Z,10Z,13Z,16Z,19Z)-docosapentaenoyl-CoA + NADP(+). It catalyses the reaction (8Z,11Z,14Z)-3-oxoeicosatrienoyl-CoA + NADPH + H(+) = (3R)-hydroxy-(8Z,11Z,14Z)-eicosatrienoyl-CoA + NADP(+). It participates in lipid metabolism; fatty acid biosynthesis. The protein operates within steroid biosynthesis; estrogen biosynthesis. Its function is as follows. Catalyzes the second of the four reactions of the long-chain fatty acids elongation cycle. This endoplasmic reticulum-bound enzymatic process, allows the addition of two carbons to the chain of long- and very long-chain fatty acids/VLCFAs per cycle. This enzyme has a 3-ketoacyl-CoA reductase activity, reducing 3-ketoacyl-CoA to 3-hydroxyacyl-CoA, within each cycle of fatty acid elongation. Thereby, it may participate in the production of VLCFAs of different chain lengths that are involved in multiple biological processes as precursors of membrane lipids and lipid mediators. May also catalyze the transformation of estrone (E1) into estradiol (E2) and play a role in estrogen formation. The protein is Very-long-chain 3-oxoacyl-CoA reductase (HSD17B12) of Anas platyrhynchos (Mallard).